The following is a 327-amino-acid chain: DNA-directed RNA polymerase subunit alpha (327 aa).

Positions 1-233 (MVREKVKVST…NLFIPFLHVE (233 aa)) are alpha N-terminal domain (alpha-NTD). Residues 266-327 (EQGFQYIFID…KKILDILEKK (62 aa)) form an alpha C-terminal domain (alpha-CTD) region.

Belongs to the RNA polymerase alpha chain family. As to quaternary structure, in plastids the minimal PEP RNA polymerase catalytic core is composed of four subunits: alpha, beta, beta', and beta''. When a (nuclear-encoded) sigma factor is associated with the core the holoenzyme is formed, which can initiate transcription.

It is found in the plastid. Its subcellular location is the chloroplast. It carries out the reaction RNA(n) + a ribonucleoside 5'-triphosphate = RNA(n+1) + diphosphate. DNA-dependent RNA polymerase catalyzes the transcription of DNA into RNA using the four ribonucleoside triphosphates as substrates. The chain is DNA-directed RNA polymerase subunit alpha from Barbarea verna (Land cress).